A 232-amino-acid polypeptide reads, in one-letter code: Phosphoglycolate phosphatase (232 aa).

Aspartate 8 acts as the Nucleophile in catalysis. Mg(2+) is bound by residues aspartate 8 and aspartate 10. Lysine 156 is a substrate binding site. Residues aspartate 179 and aspartate 183 each contribute to the Mg(2+) site.

It belongs to the archaeal SPP-like hydrolase family. It depends on Mg(2+) as a cofactor.

It catalyses the reaction 2-phosphoglycolate + H2O = glycolate + phosphate. Its function is as follows. Catalyzes the dephosphorylation of 2-phosphoglycolate. The protein is Phosphoglycolate phosphatase of Methanopyrus kandleri (strain AV19 / DSM 6324 / JCM 9639 / NBRC 100938).